Reading from the N-terminus, the 242-residue chain is Ribosomal RNA small subunit methyltransferase G (242 aa).

S-adenosyl-L-methionine-binding positions include Gly78, Phe83, 129 to 130, and Arg148; that span reads AE.

This sequence belongs to the methyltransferase superfamily. RNA methyltransferase RsmG family.

It is found in the cytoplasm. Specifically methylates the N7 position of a guanine in 16S rRNA. The sequence is that of Ribosomal RNA small subunit methyltransferase G from Lachnoclostridium phytofermentans (strain ATCC 700394 / DSM 18823 / ISDg) (Clostridium phytofermentans).